Here is a 341-residue protein sequence, read N- to C-terminus: Putative ankyrin repeat protein FPV031 (341 aa).

ANK repeat units follow at residues 23 to 55, 58 to 87, 92 to 124, 125 to 158, and 163 to 195; these read DRNS…FQET, DNLT…IINQ, CGNT…ITNN, DGFT…IRDN, and TGLT…YSTC.

The protein is Putative ankyrin repeat protein FPV031 (ANK3) of Fowlpox virus (strain NVSL) (FPV).